Consider the following 438-residue polypeptide: Glutamyl-tRNA(Gln) amidotransferase subunit D (438 aa).

The Asparaginase/glutaminase domain maps to 91 to 421 (KNLSILSTGG…SEIYEIMKTN (331 aa)). Active-site residues include Thr101, Thr177, Asp178, and Lys254.

It belongs to the asparaginase 1 family. GatD subfamily. In terms of assembly, heterodimer of GatD and GatE.

It carries out the reaction L-glutamyl-tRNA(Gln) + L-glutamine + ATP + H2O = L-glutaminyl-tRNA(Gln) + L-glutamate + ADP + phosphate + H(+). In terms of biological role, allows the formation of correctly charged Gln-tRNA(Gln) through the transamidation of misacylated Glu-tRNA(Gln) in organisms which lack glutaminyl-tRNA synthetase. The reaction takes place in the presence of glutamine and ATP through an activated gamma-phospho-Glu-tRNA(Gln). The GatDE system is specific for glutamate and does not act on aspartate. The chain is Glutamyl-tRNA(Gln) amidotransferase subunit D from Methanosphaera stadtmanae (strain ATCC 43021 / DSM 3091 / JCM 11832 / MCB-3).